Reading from the N-terminus, the 554-residue chain is D-3-phosphoglycerate dehydrogenase (554 aa).

Residues 177–178 (KI), aspartate 197, 256–258 (CSR), and aspartate 282 each bind NAD(+). Residue arginine 258 is part of the active site. Glutamate 287 is a catalytic residue. Histidine 305 acts as the Proton donor in catalysis. 305-308 (HLGA) serves as a coordination point for NAD(+). The 73-residue stretch at 482-554 (MLFTLHRDMP…GIRDAYTVKL (73 aa)) folds into the ACT domain.

It belongs to the D-isomer specific 2-hydroxyacid dehydrogenase family.

It catalyses the reaction (2R)-3-phosphoglycerate + NAD(+) = 3-phosphooxypyruvate + NADH + H(+). It carries out the reaction (R)-2-hydroxyglutarate + NAD(+) = 2-oxoglutarate + NADH + H(+). The protein operates within amino-acid biosynthesis; L-serine biosynthesis; L-serine from 3-phospho-D-glycerate: step 1/3. Functionally, catalyzes the reversible oxidation of 3-phospho-D-glycerate to 3-phosphonooxypyruvate, the first step of the phosphorylated L-serine biosynthesis pathway. Also catalyzes the reversible oxidation of 2-hydroxyglutarate to 2-oxoglutarate. This chain is D-3-phosphoglycerate dehydrogenase (serA), found in Synechocystis sp. (strain ATCC 27184 / PCC 6803 / Kazusa).